The sequence spans 258 residues: Nuclear egress protein 2 (258 aa).

At 1–228 the chain is on the perinuclear space side; sequence MLKEKMYDEL…TVPIFARRNN (228 aa). A helical membrane pass occupies residues 229–249; that stretch reads ILCGFLVAALLIVCYVIFKEF. Residues 250-258 are Nuclear-facing; that stretch reads ALSADFSAV.

This sequence belongs to the herpesviridae NEC2 protein family. In terms of assembly, forms a heterohexameric complex with NEC1. In terms of processing, phosphorylated.

It localises to the host nucleus inner membrane. Plays an essential role in virion nuclear egress, the first step of virion release from infected cell. Within the host nucleus, NEC1 interacts with the newly formed capsid through the vertexes and directs it to the inner nuclear membrane by associating with NEC2. Induces the budding of the capsid at the inner nuclear membrane as well as its envelopment into the perinuclear space. There, the NEC1/NEC2 complex promotes the fusion of the enveloped capsid with the outer nuclear membrane and the subsequent release of the viral capsid into the cytoplasm where it will reach the secondary budding sites in the host Golgi or trans-Golgi network. This chain is Nuclear egress protein 2, found in Homo sapiens (Human).